The primary structure comprises 492 residues: 5-taurinomethyluridine-[tRNA] synthase subunit GTPB3, mitochondrial (492 aa).

A mitochondrion-targeting transit peptide spans 1 to 20 (MWRGLSALVTRPASAPLRLC). 5,10-methylenetetrahydrofolate is bound by residues Arg-52, Glu-112, and Lys-152. The region spanning 249 to 416 (GANVVVAGPP…LLQALKTELA (168 aa)) is the TrmE-type G domain. GTP contacts are provided by residues 256–263 (GPPNAGKS), 282–286 (GTTRD), 303–306 (DTAG), and 374–377 (NKSD). Asn-259 serves as a coordination point for K(+). Mg(2+) contacts are provided by Ser-263 and Thr-284. Lys-492 serves as a coordination point for 5,10-methylenetetrahydrofolate.

This sequence belongs to the TRAFAC class TrmE-Era-EngA-EngB-Septin-like GTPase superfamily. TrmE GTPase family. In terms of assembly, homodimer; forms a dimer in the presence of potassium. Interacts with MTO1; forms the GTPBP3-MTO1 complex composed of homodimers of GTPBP3 and MTO1. K(+) serves as cofactor.

It is found in the mitochondrion. The catalysed reaction is GTP + H2O = GDP + phosphate + H(+). Functionally, GTPase component of the GTPBP3-MTO1 complex that catalyzes the 5-taurinomethyluridine (taum(5)U) modification at the 34th wobble position (U34) of mitochondrial tRNAs (mt-tRNAs), which plays a role in mt-tRNA decoding and mitochondrial translation. Taum(5)U formation on mammalian mt-tRNA requires the presence of both GTPBP3-mediated GTPase activity and MTO1 catalytic activity. This Rattus norvegicus (Rat) protein is 5-taurinomethyluridine-[tRNA] synthase subunit GTPB3, mitochondrial.